A 571-amino-acid chain; its full sequence is Fumarate reductase (cytochrome) (571 aa).

20 residues coordinate heme c: H8, C14, C17, H18, C36, C39, H40, H52, H58, H61, C68, C71, H72, A74, H75, C82, C85, H86, N91, and Y94. The flavoprotein-like stretch occupies residues 118-571 (ALASAPHDTV…EEAAKYSKKN (454 aa)). Residues A137, E156, N164, A165, A169, G170, G171, G278, and Q338 each contribute to the FAD site. G170 serves as a coordination point for succinate. Residues H365, T377, and E378 each coordinate succinate. Residues T377, E378, and R402 each coordinate fumarate. Catalysis depends on R402, which acts as the Proton donor. K431 is a binding site for heme c. H504 is a succinate binding site. A fumarate-binding site is contributed by H504. 2 residues coordinate FAD: H505 and E534. Succinate contacts are provided by R544 and G547. 2 residues coordinate fumarate: R544 and G547. A549 and I550 together coordinate FAD.

Monomer. FAD is required as a cofactor. The cofactor is heme c.

The protein resides in the periplasm. It carries out the reaction 2 Fe(III)-[cytochrome c] + succinate = fumarate + 2 Fe(II)-[cytochrome c] + 2 H(+). Its function is as follows. Flavocytochrome that catalyzes the reduction of fumarate to succinate. Is essential for fumarate respiration during anaerobic growth, acting as the terminal reductase. Receives electrons from the membrane-bound tetraheme c-type cytochrome CymA. In vitro, can use the artificial electron donor methyl viologen. In Shewanella frigidimarina, this protein is Fumarate reductase (cytochrome) (fccA).